The sequence spans 101 residues: NADH-quinone oxidoreductase subunit K (101 aa).

3 consecutive transmembrane segments (helical) span residues Val-4–Ile-24, Ile-29–Ala-49, and Phe-65–Phe-85.

The protein belongs to the complex I subunit 4L family. NDH-1 is composed of 14 different subunits. Subunits NuoA, H, J, K, L, M, N constitute the membrane sector of the complex.

The protein localises to the cell inner membrane. The catalysed reaction is a quinone + NADH + 5 H(+)(in) = a quinol + NAD(+) + 4 H(+)(out). Its function is as follows. NDH-1 shuttles electrons from NADH, via FMN and iron-sulfur (Fe-S) centers, to quinones in the respiratory chain. The immediate electron acceptor for the enzyme in this species is believed to be ubiquinone. Couples the redox reaction to proton translocation (for every two electrons transferred, four hydrogen ions are translocated across the cytoplasmic membrane), and thus conserves the redox energy in a proton gradient. In Sphingopyxis alaskensis (strain DSM 13593 / LMG 18877 / RB2256) (Sphingomonas alaskensis), this protein is NADH-quinone oxidoreductase subunit K.